The chain runs to 122 residues: Large ribosomal subunit protein uL14 (122 aa).

Belongs to the universal ribosomal protein uL14 family. Part of the 50S ribosomal subunit. Forms a cluster with proteins L3 and L19. In the 70S ribosome, L14 and L19 interact and together make contacts with the 16S rRNA in bridges B5 and B8.

In terms of biological role, binds to 23S rRNA. Forms part of two intersubunit bridges in the 70S ribosome. The polypeptide is Large ribosomal subunit protein uL14 (Symbiobacterium thermophilum (strain DSM 24528 / JCM 14929 / IAM 14863 / T)).